A 107-amino-acid polypeptide reads, in one-letter code: Integration host factor subunit beta (107 aa).

The interval Phe-76–Arg-107 is disordered. The segment covering Pro-82–Asp-101 has biased composition (basic and acidic residues).

Belongs to the bacterial histone-like protein family. In terms of assembly, heterodimer of an alpha and a beta chain.

Functionally, this protein is one of the two subunits of integration host factor, a specific DNA-binding protein that functions in genetic recombination as well as in transcriptional and translational control. This Burkholderia cenocepacia (strain HI2424) protein is Integration host factor subunit beta.